Here is a 558-residue protein sequence, read N- to C-terminus: Ankyrin repeat protein OPG189 (558 aa).

7 ANK repeats span residues 65–95 (YGENILHIYSMDDANTNIIIFFLDRVLNINK), 169–205 (YGCTLLHRCIYHYKKSESESYNELIKILLNNGSDVDK), 209–239 (YGNTPFILLCKHDINNVELFEICLENANIDS), 243–272 (NRYTPLHYVSCRNKYDFVKLLISKGANVNA), 276–304 (FGTTPFYCGIIHGISLIKLYLESDTELEI), 339–368 (YNETSIYDAVSYNAYNTLVYLLNRNGDFET), and 372–401 (SGCTCISEAVANNNKIIMEVLLSKRPSLKI).

It belongs to the orthopoxvirus OPG189 protein family.

In terms of biological role, contributes to viral release without involving rearrangement of host actin. The sequence is that of Ankyrin repeat protein OPG189 (OPG189) from Vaccinia virus (strain Western Reserve) (VACV).